A 325-amino-acid chain; its full sequence is S-adenosylmethionine carrier 1, chloroplastic/mitochondrial (325 aa).

The transit peptide at Met1–Ala38 directs the protein to the chloroplast and mitochondrion. 3 Solcar repeats span residues Arg52–Lys124, Leu133–Gly215, and Glu228–Thr310. 5 helical membrane-spanning segments follow: residues Phe55–Ile75, Tyr97–Val117, His132–Ile152, Ala230–Ile250, and Gly285–Glu305.

Belongs to the mitochondrial carrier (TC 2.A.29) family. As to expression, expressed in seedlings, cotyledons, leaves and flowers. Lower levels of expression in stems and roots. Not detected in senescent leaves, petals and pollen grains.

The protein resides in the mitochondrion membrane. It localises to the plastid. It is found in the chloroplast membrane. With respect to regulation, inhibited strongly by tannic acid, bromocresol purple, mercuric chloride, mersalyl, p-hydroxymercuribenzoate, S-adenosylhomocysteine, S-adenosylcysteine and adenosylornithine, and to a lesser extent by N-ethylmaleimide, bathophenanthroline and pyridoxal-5'-P. Transporter involved in exchange reactions through membranes. Has a low uniporter activity. Specifically mediates the transport of S-adenosylmethionine (SAM) and its closest analogs. Probably involved in the uptake of SAM in exchange for S-adenosylhomocysteine (SAHC), which is produced from SAM in the mitochondrial matrix and plastidial stroma by methyltransferase activities. The sequence is that of S-adenosylmethionine carrier 1, chloroplastic/mitochondrial (SAMC1) from Arabidopsis thaliana (Mouse-ear cress).